Here is a 259-residue protein sequence, read N- to C-terminus: uncharacterized protein (259 aa).

The segment at residues methionine 1–threonine 19 is a signal peptide (or 26). Residue glycine 214–threonine 221 participates in ATP binding.

This is an uncharacterized protein from Bacillus subtilis (strain 168).